Reading from the N-terminus, the 901-residue chain is Valine--tRNA ligase (901 aa).

Positions 536–540 (KLSKS) match the 'KMSKS' region motif. Residue lysine 539 coordinates ATP. The stretch at 831–901 (LEGLISFEKE…KLQGNLEVLS (71 aa)) forms a coiled coil.

It belongs to the class-I aminoacyl-tRNA synthetase family. ValS type 1 subfamily. In terms of assembly, monomer.

The protein localises to the cytoplasm. The enzyme catalyses tRNA(Val) + L-valine + ATP = L-valyl-tRNA(Val) + AMP + diphosphate. In terms of biological role, catalyzes the attachment of valine to tRNA(Val). As ValRS can inadvertently accommodate and process structurally similar amino acids such as threonine, to avoid such errors, it has a 'posttransfer' editing activity that hydrolyzes mischarged Thr-tRNA(Val) in a tRNA-dependent manner. This Chlorobaculum tepidum (strain ATCC 49652 / DSM 12025 / NBRC 103806 / TLS) (Chlorobium tepidum) protein is Valine--tRNA ligase.